Consider the following 528-residue polypeptide: Sodium-dependent lysophosphatidylcholine symporter 1 (528 aa).

Residues 1–37 (MAGGGGAERVRVGAAAAGLLPPSCRQPRRRESRERLS) lie on the Cytoplasmic side of the membrane. Residues 38-66 (VCSKLCYAVGGAPYQTTGCALGFFLQIYL) form a helical membrane-spanning segment. The Extracellular portion of the chain corresponds to 67–73 (LDVAQLD). The helical transmembrane segment at 74-99 (PFYASIILFVGRAWDAITDPMVGFFI) threads the bilayer. At 100–109 (SKTPWTRFGR) the chain is on the cytoplasmic side. Residues 110–129 (LMPWIIFSTPFAVISYFLIW) traverse the membrane as a helical segment. The Extracellular segment spans residues 130 to 138 (FVPDISTGQ). Residues 139–161 (VMWYLIFYCIFQTLVTCFHVPYS) traverse the membrane as a helical segment. Residues 162 to 176 (ALTMFISREQSERDS) are Cytoplasmic-facing. Residues 177-199 (ATAYRMTVEVLGTVLGTAIQGQI) form a helical membrane-spanning segment. The Extracellular segment spans residues 200-241 (VGKAVTPCIENPPFLSETNFSVAIRNVNMTHYTGSLADTRNA). The cysteines at positions 207 and 460 are disulfide-linked. 2 N-linked (GlcNAc...) asparagine glycosylation sites follow: asparagine 218 and asparagine 227. The chain crosses the membrane as a helical span at residues 242–263 (YMVAAGVIGGLYILCAVILSVG). Residues 264–295 (VREKRESSELQSDEPVSFFRGLKLVMNHGAYI) are Cytoplasmic-facing. Residues 296-319 (KLITGFLFTSLAFMLLEGNFALFC) traverse the membrane as a helical segment. At 320-328 (TYTLGFRNE) the chain is on the extracellular side. Residues 329–351 (FQNILLAIMLSATLTIPFWQWFL) traverse the membrane as a helical segment. The Cytoplasmic segment spans residues 352–355 (TRFG). Residues 356–376 (KKTAVYVGISSAVPFLITVVV) traverse the membrane as a helical segment. The Extracellular segment spans residues 377–381 (LDSNL). A helical membrane pass occupies residues 382 to 404 (VVTYIVAVAAGISVAAAFLLPWS). At 405–427 (MLPDVIDDFKLQHPESRGHEAIF) the chain is on the cytoplasmic side. Residues 428–450 (FSFYVFFTKFTSGVSLGISTLSL) form a helical membrane-spanning segment. At 451–467 (DFAGYQTRGCSQPSEVN) the chain is on the extracellular side. A helical membrane pass occupies residues 468–490 (ITLKLLVSAVPVGLILLGLLLFK). The Cytoplasmic segment spans residues 491–528 (LYPIDEEKRRENKKALQDLREESNSSSESDSTELANIV). Over residues 503–513 (KKALQDLREES) the composition is skewed to basic and acidic residues. Residues 503–528 (KKALQDLREESNSSSESDSTELANIV) are disordered. Low complexity predominate over residues 514 to 528 (NSSSESDSTELANIV).

The protein belongs to the major facilitator superfamily.

The protein localises to the cell membrane. It localises to the endoplasmic reticulum membrane. The enzyme catalyses a 1-acyl-sn-glycero-3-phosphocholine(in) + Na(+)(in) = a 1-acyl-sn-glycero-3-phosphocholine(out) + Na(+)(out). It catalyses the reaction 1-(4Z,7Z,10Z,13Z,16Z,19Z-docosahexaenoyl)-sn-glycero-3-phosphocholine(in) + Na(+)(in) = 1-(4Z,7Z,10Z,13Z,16Z,19Z-docosahexaenoyl)-sn-glycero-3-phosphocholine(out) + Na(+)(out). It carries out the reaction 1-(9Z-octadecenoyl)-sn-glycero-3-phosphocholine(in) + Na(+)(in) = 1-(9Z-octadecenoyl)-sn-glycero-3-phosphocholine(out) + Na(+)(out). The catalysed reaction is 1-hexadecanoyl-sn-glycero-3-phosphocholine(in) + Na(+)(in) = 1-hexadecanoyl-sn-glycero-3-phosphocholine(out) + Na(+)(out). The enzyme catalyses a 1-acyl-sn-glycero-3-phosphoethanolamine(in) + Na(+)(in) = a 1-acyl-sn-glycero-3-phosphoethanolamine(out) + Na(+)(out). Functionally, sodium-dependent lysophosphatidylcholine (LPC) symporter, which plays an essential role for blood-brain barrier formation and function. Specifically expressed in endothelium of the blood-brain barrier of micro-vessels and transports LPC into the brain. Transport of LPC is essential because it constitutes the major mechanism by which docosahexaenoic acid (DHA), an omega-3 fatty acid that is essential for normal brain growth and cognitive function, enters the brain. Transports LPC carrying long-chain fatty acids such LPC oleate and LPC palmitate with a minimum acyl chain length of 14 carbons. Does not transport docosahexaenoic acid in unesterified fatty acid. This Gallus gallus (Chicken) protein is Sodium-dependent lysophosphatidylcholine symporter 1.